The chain runs to 415 residues: Gamma-glutamyl phosphate reductase (415 aa).

The protein belongs to the gamma-glutamyl phosphate reductase family.

It is found in the cytoplasm. The enzyme catalyses L-glutamate 5-semialdehyde + phosphate + NADP(+) = L-glutamyl 5-phosphate + NADPH + H(+). The protein operates within amino-acid biosynthesis; L-proline biosynthesis; L-glutamate 5-semialdehyde from L-glutamate: step 2/2. Its function is as follows. Catalyzes the NADPH-dependent reduction of L-glutamate 5-phosphate into L-glutamate 5-semialdehyde and phosphate. The product spontaneously undergoes cyclization to form 1-pyrroline-5-carboxylate. The chain is Gamma-glutamyl phosphate reductase from Cutibacterium acnes (strain DSM 16379 / KPA171202) (Propionibacterium acnes).